Here is a 380-residue protein sequence, read N- to C-terminus: Cytochrome b (380 aa).

Transmembrane regions (helical) follow at residues 33–53, 77–98, 113–133, and 178–198; these read FGSLLGICLMVQIITGLFLAM, WLIRYAHANGASMFFICLFIHV, WNIGIILLLTTMATAFVGYVL, and FFAFHFILPFIITALVLVHLL. Residues H83 and H97 each contribute to the heme b site. Residues H182 and H196 each contribute to the heme b site. H201 is a binding site for a ubiquinone. The next 4 membrane-spanning stretches (helical) occupy residues 226-246, 288-308, 320-340, and 347-367; these read IKDILGVLLLLMVLMFLVLFF, LGGVLALLLSILILAAFPLLN, ITQTLYWIFVANLLILTWIGG, and FTTIGQISSIMYFMIIVIFMP.

Belongs to the cytochrome b family. As to quaternary structure, the cytochrome bc1 complex contains 11 subunits: 3 respiratory subunits (MT-CYB, CYC1 and UQCRFS1), 2 core proteins (UQCRC1 and UQCRC2) and 6 low-molecular weight proteins (UQCRH/QCR6, UQCRB/QCR7, UQCRQ/QCR8, UQCR10/QCR9, UQCR11/QCR10 and a cleavage product of UQCRFS1). This cytochrome bc1 complex then forms a dimer. It depends on heme b as a cofactor.

It is found in the mitochondrion inner membrane. Component of the ubiquinol-cytochrome c reductase complex (complex III or cytochrome b-c1 complex) that is part of the mitochondrial respiratory chain. The b-c1 complex mediates electron transfer from ubiquinol to cytochrome c. Contributes to the generation of a proton gradient across the mitochondrial membrane that is then used for ATP synthesis. This is Cytochrome b (MT-CYB) from Microryzomys minutus (Forest small rice rat).